Reading from the N-terminus, the 336-residue chain is MAGQESLTLAGVLRGHNDMVTAIAAPIDNSPFIVSSSRDKSLLVWDITNPSTAVATDPEAAPPEYGVSYRRLTGHSHFVQDVVLSSDGQFALSGSWDGELRLWDLATGRTTRRFVGHTKDVLSVAFSVDNRQIVSAARDNTIKLWNTLGECKYTIGGDHGAGEGHTGWVSCVRFSPNPMAPTIVSGSWDRSVKVWNLTNCKLRTKLEGHNGYVNAVAVSPDGSLCASGGKDGTTLLWDLTEGKMLYKLDAGAIIHSLCFSPNRYWLCAATEDSVKIWDLESKLVMQDLKPEVQAFKSQMLYCTSLSWSADGSTLFAGYTDGTIRVWKVSGFGGYAI.

WD repeat units lie at residues 15 to 55, 74 to 113, 116 to 155, 164 to 205, 208 to 247, 249 to 287, and 297 to 336; these read GHND…TAVA, GHSH…TTRR, GHTK…KYTI, GHTG…LRTK, GHNG…MLYK, DAGA…VMQD, and SQML…GYAI.

The protein belongs to the WD repeat G protein beta family. Ribosomal protein RACK1 subfamily. In terms of assembly, homodimer and heterodimer with RACK1A.

Component of the RACK1 regulatory proteins that play a role in multiple signal transduction pathways. This chain is Small ribosomal subunit protein RACK1y (RACK1B), found in Oryza sativa subsp. japonica (Rice).